We begin with the raw amino-acid sequence, 612 residues long: MAERSGYRQLQLLQDASLWREYCEARSESSIYLSNLQTHADAVLSRYRDYLGHEFEQVWIDCHDGLHADAIAALCGTVTAGGLLSILLPAESNAMSHRMERFAAKHFAESNIKPYSSVNKTETRSANETLQLTNEQNSIFNALTQSTAKPYETHIITAERGRGKSTLLGQALAQAKEHRSIIVTAPRKANAKVLLQQAPEAHFVAWDKLLEQPGNSEVTLIIDEAAGLPLWATEQLCQKFNPWLLATTVAGYEGCGRGFAVHFTDWARKTLPQVSVHQLTQPLRWPANDPLEQWLTETFLLNEQPVTQFGNRESGTFIKHASELEEALLQQCFQLLLSAHYQSSPNDLNLLLTEPGHKLAYQSTNGEVTAVAWLMSEGPILSPLKEEVRQGQRRPKGNLLPQAIGYFLQQDWAMDLHWLRVARIAVPAAKRRRKAASELLAEIYRWALDNNYQMLGTSFAWSPGLDNFWKKNGYALWRLSSRIDSVSARPAAIYALPLTNEFTELYRVCQLLGQWGQNQLQWLSGGKETLQLTEERNKIRTSLIQAYRSKTIPFDAAHFALAQWFYWQHSNHPLTELLCNSSTTLKHLGEYWGGVSQRQANENLCKEVCLLH.

ATP is bound by residues Q136, 161–170 (GRGKSTLLGQ), and R284. The N-acetyltransferase domain maps to 319–499 (KHASELEEAL…PAAIYALPLT (181 aa)). 424–426 (IAV) contacts acetyl-CoA.

Belongs to the RNA cytidine acetyltransferase family. TmcA subfamily.

The protein localises to the cytoplasm. It carries out the reaction cytidine(34) in elongator tRNA(Met) + acetyl-CoA + ATP + H2O = N(4)-acetylcytidine(34) in elongator tRNA(Met) + ADP + phosphate + CoA + H(+). Its function is as follows. Catalyzes the formation of N(4)-acetylcytidine (ac(4)C) at the wobble position of tRNA(Met), by using acetyl-CoA as an acetyl donor and ATP (or GTP). This Idiomarina loihiensis (strain ATCC BAA-735 / DSM 15497 / L2-TR) protein is tRNA(Met) cytidine acetyltransferase TmcA.